Here is a 103-residue protein sequence, read N- to C-terminus: Large ribosomal subunit protein bL21 (103 aa).

The protein belongs to the bacterial ribosomal protein bL21 family. In terms of assembly, part of the 50S ribosomal subunit. Contacts protein L20.

In terms of biological role, this protein binds to 23S rRNA in the presence of protein L20. The chain is Large ribosomal subunit protein bL21 from Mycobacterium leprae (strain Br4923).